The sequence spans 156 residues: ADP-ribose 1''-phosphate phosphatase (156 aa).

The region spanning 1 to 156 is the Macro domain; the sequence is MIQYIKGDLF…DNLHFNVYVI (156 aa). Residues 7 to 9, 25 to 27, 32 to 37, and 127 to 133 contribute to the substrate site; these read GDL, ACN, WGGGIA, and INAGIFG.

This sequence belongs to the POA1 family.

The catalysed reaction is ADP-alpha-D-ribose 1''-phosphate + H2O = ADP-D-ribose + phosphate. In terms of biological role, highly specific phosphatase involved in the metabolism of ADP-ribose 1''-phosphate (Appr1p) which is produced as a consequence of tRNA splicing. The chain is ADP-ribose 1''-phosphate phosphatase (POA1) from Candida albicans (strain SC5314 / ATCC MYA-2876) (Yeast).